Here is a 362-residue protein sequence, read N- to C-terminus: Phosphoserine aminotransferase (362 aa).

Arg-43 is an L-glutamate binding site. Pyridoxal 5'-phosphate is bound by residues Ala-77–Thr-78, Trp-103, Thr-153, Asp-173, and Gln-196. An N6-(pyridoxal phosphate)lysine modification is found at Lys-197. Asn-238–Thr-239 contributes to the pyridoxal 5'-phosphate binding site.

It belongs to the class-V pyridoxal-phosphate-dependent aminotransferase family. SerC subfamily. As to quaternary structure, homodimer. Pyridoxal 5'-phosphate is required as a cofactor.

The protein localises to the cytoplasm. The enzyme catalyses O-phospho-L-serine + 2-oxoglutarate = 3-phosphooxypyruvate + L-glutamate. The catalysed reaction is 4-(phosphooxy)-L-threonine + 2-oxoglutarate = (R)-3-hydroxy-2-oxo-4-phosphooxybutanoate + L-glutamate. Its pathway is amino-acid biosynthesis; L-serine biosynthesis; L-serine from 3-phospho-D-glycerate: step 2/3. The protein operates within cofactor biosynthesis; pyridoxine 5'-phosphate biosynthesis; pyridoxine 5'-phosphate from D-erythrose 4-phosphate: step 3/5. Its function is as follows. Catalyzes the reversible conversion of 3-phosphohydroxypyruvate to phosphoserine and of 3-hydroxy-2-oxo-4-phosphonooxybutanoate to phosphohydroxythreonine. The protein is Phosphoserine aminotransferase of Xylella fastidiosa (strain 9a5c).